The sequence spans 125 residues: Fumarate reductase subunit D (125 aa).

The next 3 helical transmembrane spans lie at 30–50 (FAMI…LGVI), 63–83 (FATS…PMWH), and 105–125 (IACY…IFMI).

Belongs to the FrdD family. As to quaternary structure, part of an enzyme complex containing four subunits: a flavoprotein (FrdA), an iron-sulfur protein (FrdB), and two hydrophobic anchor proteins (FrdC and FrdD).

It localises to the cell inner membrane. In terms of biological role, anchors the catalytic components of the fumarate reductase complex to the cell membrane, binds quinones. In Vibrio campbellii (strain ATCC BAA-1116), this protein is Fumarate reductase subunit D.